Here is a 486-residue protein sequence, read N- to C-terminus: Ribulose bisphosphate carboxylase large chain (486 aa).

2 residues coordinate substrate: asparagine 125 and threonine 175. The active-site Proton acceptor is the lysine 177. Residue lysine 179 coordinates substrate. Residues lysine 203, aspartate 205, and glutamate 206 each contribute to the Mg(2+) site. An N6-carboxylysine modification is found at lysine 203. Histidine 295 functions as the Proton acceptor in the catalytic mechanism. Positions 296, 328, and 380 each coordinate substrate.

The protein belongs to the RuBisCO large chain family. Type I subfamily. As to quaternary structure, heterohexadecamer of 8 large chains and 8 small chains. Mg(2+) serves as cofactor.

It carries out the reaction 2 (2R)-3-phosphoglycerate + 2 H(+) = D-ribulose 1,5-bisphosphate + CO2 + H2O. The catalysed reaction is D-ribulose 1,5-bisphosphate + O2 = 2-phosphoglycolate + (2R)-3-phosphoglycerate + 2 H(+). In terms of biological role, ruBisCO catalyzes two reactions: the carboxylation of D-ribulose 1,5-bisphosphate, the primary event in carbon dioxide fixation, as well as the oxidative fragmentation of the pentose substrate. Both reactions occur simultaneously and in competition at the same active site. The polypeptide is Ribulose bisphosphate carboxylase large chain (Afipia carboxidovorans (strain ATCC 49405 / DSM 1227 / KCTC 32145 / OM5) (Oligotropha carboxidovorans)).